Reading from the N-terminus, the 702-residue chain is p-hydroxybenzoic acid--AMP ligase FadD22 (702 aa).

In terms of domain architecture, Carrier spans 538–616 (ERHRLVLDAV…GLAQYLEAEL (79 aa)). Ser-576 carries the post-translational modification O-(pantetheine 4'-phosphoryl)serine.

The protein belongs to the ATP-dependent AMP-binding enzyme family.

The enzyme catalyses holo-[4-hydroxyphenylalkanoate synthase] + 4-hydroxybenzoate + ATP = 4-hydroxyphenyl-[4-hydroxyphenylalkanoate synthase] + AMP + diphosphate. It participates in lipid metabolism; fatty acid biosynthesis. In terms of biological role, catalyzes the adenylation of p-hydroxybenzoic acid (pHBA) to form p-hydroxybenzoic acid-AMP (pHBA-AMP), which is converted directly to p-hydroxybenzoyl-S-FadD22 (pHBA-S-FAdD22) thioester intermediate in a CoA-independent manner by attack of the phosphopantetheine thiol of FadD22. This intermediate primes the biosynthesis of the phenolphthiocerol (PPOL) by presenting the pHBA starter unit for elongation by Pks15/1. PPOL is an important intermediate in the biosynthesis of phenolic glycolipid (mycosid B). This chain is p-hydroxybenzoic acid--AMP ligase FadD22 (fadD22), found in Mycobacterium marinum (strain ATCC BAA-535 / M).